The primary structure comprises 396 residues: CCA-adding enzyme (396 aa).

ATP-binding residues include Gly32 and Arg35. 2 residues coordinate CTP: Gly32 and Arg35. Mg(2+) contacts are provided by Asp45 and Asp47. The ATP site is built by Arg116, Asp159, Arg162, Arg165, and Arg168. CTP-binding residues include Arg116, Asp159, Arg162, Arg165, and Arg168.

It belongs to the tRNA nucleotidyltransferase/poly(A) polymerase family. Bacterial CCA-adding enzyme type 3 subfamily. Homodimer. Mg(2+) is required as a cofactor.

The catalysed reaction is a tRNA precursor + 2 CTP + ATP = a tRNA with a 3' CCA end + 3 diphosphate. It carries out the reaction a tRNA with a 3' CCA end + 2 CTP + ATP = a tRNA with a 3' CCACCA end + 3 diphosphate. Its function is as follows. Catalyzes the addition and repair of the essential 3'-terminal CCA sequence in tRNAs without using a nucleic acid template. Adds these three nucleotides in the order of C, C, and A to the tRNA nucleotide-73, using CTP and ATP as substrates and producing inorganic pyrophosphate. tRNA 3'-terminal CCA addition is required both for tRNA processing and repair. Also involved in tRNA surveillance by mediating tandem CCA addition to generate a CCACCA at the 3' terminus of unstable tRNAs. While stable tRNAs receive only 3'-terminal CCA, unstable tRNAs are marked with CCACCA and rapidly degraded. The chain is CCA-adding enzyme from Lactobacillus delbrueckii subsp. bulgaricus (strain ATCC 11842 / DSM 20081 / BCRC 10696 / JCM 1002 / NBRC 13953 / NCIMB 11778 / NCTC 12712 / WDCM 00102 / Lb 14).